A 380-amino-acid chain; its full sequence is MYSSSVCIKIHLERLRYNLRILRSRYPNVMPVIKANAYGHGIRVVANVLRDEGVQHMAVGSITEGFLLRQEGHQAFLLALLGPFSEEDARIAVVHNITPVIHNIESLQSIVHYSRVHQGGTAVPVAIKIDTGMGRLGFSSNDYISLIDLLRHTPEVNPILLLSHLVAPEISSLDNVTHNQVEQFARAYKAIKEAFPTIKTSLTNSPGLLAWPNYIGDFSRPGIALYGGNPFYGTSRVSLGKGFLPVMEVEAPVVAINTVSAGSSIGYGCTYYAKEDIRVAVIGAGYADGYSRSFSNKGWVVIKGKRYRIVGRVCMQMLMVDITNSHSKISIGDKAFLLGGGGSLAIKPEELAEWWGTIPHEVCCSLGSSIGAQQKQLVII.

Lys34 functions as the Proton acceptor; specific for D-alanine in the catalytic mechanism. Lys34 is modified (N6-(pyridoxal phosphate)lysine). Arg135 serves as a coordination point for substrate. Tyr267 serves as the catalytic Proton acceptor; specific for L-alanine. Met315 provides a ligand contact to substrate.

It belongs to the alanine racemase family. Pyridoxal 5'-phosphate is required as a cofactor.

The enzyme catalyses L-alanine = D-alanine. Its pathway is amino-acid biosynthesis; D-alanine biosynthesis; D-alanine from L-alanine: step 1/1. Its function is as follows. Catalyzes the interconversion of L-alanine and D-alanine. May also act on other amino acids. This chain is Alanine racemase (alr), found in Lawsonia intracellularis (strain PHE/MN1-00).